We begin with the raw amino-acid sequence, 766 residues long: Tetratricopeptide repeat protein 14 (766 aa).

Residues 35-55 form a disordered region; the sequence is LGTAAEPARGAAPPPGAGRKE. An S1 motif domain is found at 125–207; it reads GDIVIGRISS…YHEKLAVSLY (83 aa). TPR repeat units lie at residues 209 to 242, 306 to 339, 341 to 373, and 381 to 414; these read SSLP…NSNS, ALKC…DKQN, EALV…CPTH, and CQTL…DETF. The tract at residues 463 to 743 is disordered; it reads EEKRLKKKRR…PDSRVKKNLP (281 aa). Residues 475 to 496 are compositionally biased toward low complexity; it reads SSSSSVSSADESVSSSSSSSSS. The segment covering 497 to 506 has biased composition (basic residues); sequence SHKRHKKSKR. Positions 539–550 are enriched in polar residues; sequence PTNTSASFLNQK. Over residues 551-562 the composition is skewed to basic and acidic residues; it reads QEVEKLLEKQDR. A compositionally biased stretch (polar residues) spans 594-605; that stretch reads FYNSYKTQAGSS. Basic and acidic residues-rich tracts occupy residues 606–616 and 629–657; these read KTEKPYKSERH and NSED…RRWE. Residues 661–673 show a composition bias toward polar residues; sequence VKYSTSPASSDYS. Ser666 is modified (phosphoserine). Over residues 707-738 the composition is skewed to basic and acidic residues; sequence RVYEKEDSCGEGNRNEAPEEMLNSKEQPDSRV.

This sequence belongs to the TTC14 family.

The protein is Tetratricopeptide repeat protein 14 of Mus musculus (Mouse).